Consider the following 369-residue polypeptide: Glycine oxidase (369 aa).

Residues 14 to 15 (II), 34 to 35 (ES), 42 to 43 (AT), 47 to 49 (AGM), and V174 each bind FAD. Residues R302 and R329 each contribute to the substrate site. 327-333 (HFRNGIL) lines the FAD pocket.

This sequence belongs to the DAO family. ThiO subfamily. Homotetramer. It depends on FAD as a cofactor.

The enzyme catalyses glycine + O2 + H2O = glyoxylate + H2O2 + NH4(+). The catalysed reaction is glyphosate + O2 + H2O = aminomethylphosphonate + glyoxylate + H2O2 + H(+). It carries out the reaction N-ethylglycine + O2 + H2O = ethylamine + glyoxylate + H2O2. It catalyses the reaction sarcosine + O2 + H2O = methylamine + glyoxylate + H2O2. The enzyme catalyses D-alanine + O2 + H2O = pyruvate + H2O2 + NH4(+). Its pathway is cofactor biosynthesis; thiamine diphosphate biosynthesis. In terms of biological role, catalyzes the FAD-dependent oxidative deamination of glycine, leading to glyoxylate, ammonia and hydrogen peroxide. Is also able to act on various amines and D-amino acids to yield the corresponding alpha-keto acids, ammonia/amine, and hydrogen peroxide. Can also oxidize the herbicide glyphosate (N-phosphonomethylglycine), and thus may be involved in the degradation pathway that allows B.licheniformis J33-8 to grow with glyphosate as the sole source of carbon. Is essential for thiamine biosynthesis since the oxidation of glycine catalyzed by ThiO generates the glycine imine intermediate (dehydroglycine) required for the biosynthesis of the thiazole ring of thiamine pyrophosphate. The polypeptide is Glycine oxidase (Bacillus licheniformis).